We begin with the raw amino-acid sequence, 523 residues long: Spastin (523 aa).

Topologically, residues 1–41 are cytoplasmic; that stretch reads MLDKLSKHKTMFYERVKEIDQILFSQQQAKQTQLDNLSNNN. The segment at residues 42-58 is an intramembrane region (helical); the sequence is ASGGFFSGFMKMFSPLS. Low complexity-rich tracts occupy residues 57 to 71, 171 to 184, and 193 to 210; these read LSTP…NSNT, QQPP…QQQP, and TALR…TANN. Disordered regions lie at residues 57–77 and 129–218; these read LSTP…AISQ and GISS…LDQI. The Cytoplasmic segment spans residues 59 to 523; it reads TPPNSSSNNN…ESYGTFAKGI (465 aa).

Belongs to the AAA ATPase family. Spastin subfamily. Homohexamer. The homohexamer is stabilized by ATP-binding. The homohexamer may adopt a ring conformation through which microtubules pass prior to being severed.

The protein localises to the membrane. It catalyses the reaction n ATP + n H2O + a microtubule = n ADP + n phosphate + (n+1) alpha/beta tubulin heterodimers.. ATP-dependent microtubule severing protein. Stimulates microtubule minus-end depolymerization and poleward microtubule flux in the mitotic spindle. The chain is Spastin from Naegleria gruberi (Amoeba).